Here is a 310-residue protein sequence, read N- to C-terminus: Ribonuclease Z (310 aa).

Residues His64, His66, Asp68, His69, His142, Asp213, and His271 each coordinate Zn(2+). The Proton acceptor role is filled by Asp68.

This sequence belongs to the RNase Z family. In terms of assembly, homodimer. Zn(2+) serves as cofactor.

The enzyme catalyses Endonucleolytic cleavage of RNA, removing extra 3' nucleotides from tRNA precursor, generating 3' termini of tRNAs. A 3'-hydroxy group is left at the tRNA terminus and a 5'-phosphoryl group is left at the trailer molecule.. Zinc phosphodiesterase, which displays some tRNA 3'-processing endonuclease activity. Probably involved in tRNA maturation, by removing a 3'-trailer from precursor tRNA. This Treponema pallidum (strain Nichols) protein is Ribonuclease Z.